The chain runs to 453 residues: Pentatricopeptide repeat-containing protein At2g38420, mitochondrial (453 aa).

The N-terminal 77 residues, 1–77 (MARSSSWHRM…CEPTPQAYRF (77 aa)), are a transit peptide targeting the mitochondrion. PPR repeat units lie at residues 107–141 (PESIFRDVIAAYGFSGRIEEAIEVFFKIPNFRCVP), 142–177 (SAYTLNALLLVLVRKRQSLELVPEILVKACRMGVRL), 178–212 (EESTFGILIDALCRIGEVDCATELVRYMSQDSVIV), 213–249 (DPRLYSRLLSSVCKHKDSSCFDVIGYLEDLRKTRFSP), 250–284 (GLRDYTVVMRFLVEGGRGKEVVSVLNQMKCDRVEP), 285–319 (DLVCYTIVLQGVIADEDYPKADKLFDELLLLGLAP), 320–354 (DVYTYNVYINGLCKQNDIEGALKMMSSMNKLGSEP), 355–389 (NVVTYNILIKALVKAGDLSRAKTLWKEMETNGVNR), and 390–424 (NSHTFDIMISAYIEVDEVVCAHGLLEEAFNMNVFV).

This sequence belongs to the PPR family. P subfamily.

It is found in the mitochondrion. The sequence is that of Pentatricopeptide repeat-containing protein At2g38420, mitochondrial from Arabidopsis thaliana (Mouse-ear cress).